The primary structure comprises 1249 residues: Apoptotic protease-activating factor 1 (1249 aa).

Positions 1–90 (MDAKARNCLL…KDLAGLLHSG (90 aa)) constitute a CARD domain. In terms of domain architecture, NB-ARC spans 106–415 (NTSFVRTVLC…LETEEVEDIL (310 aa)). ATP-binding positions include 154-161 (GMAGCGKS) and Arg-265. The stretch at 613–652 (PHTDAVYHACFSQDGQRIASCGADKTLQVFKAETGEKLLD) is one WD 1-1 repeat. One copy of the WD 1-2 repeat lies at 655 to 694 (AHEDEVLCCAFSSDDSYIATCSVDKKVKIWDSGTGKLVHT). The WD 1-3 repeat unit spans residues 697–738 (EHSEQVNCCHFTNKSNHLLLATGSNDSFLKLWDLNQKECRNT). The WD 1-4 repeat unit spans residues 741–780 (GHTNSVTHCRFSPDDELLASCSADGTLKLWDVRSANEKKS). A WD 1-5 repeat occupies 796-837 (DVEVIVKCCSWSADGDRIIVAAKNKVLLLDIHTSGLLTEIHT). Residues 838-877 (GHHSTIQYCDFSPYDHLAVIALSQYCVELWNIDSRVKVAD) form a WD 1-6 repeat. Residues 880 to 910 (GHLSWVHGVMFSPDGSSFLTASDDQTIRVWE) form a WD 1-7 repeat. The segment at 910 to 921 (ETRKVCKNSAIV) is interpropeller linker. Residues 922-958 (LKQEIDVVFQENEMMVLAVDNIRGLQLIAGKTGQIDY) form a WD 2-1 repeat. The stretch at 959–998 (LPEAQVSCCCLSPHLEYVAFGDEEGAIKIIELPNNRVFSS) is one WD 2-2 repeat. One copy of the WD 2-3 repeat lies at 1001-1040 (GHKKAVRHIQFTADGKTLISSSEDSVIQVWNWQTEEYVFL). The WD 2-4 repeat unit spans residues 1042–1080 (AHQETVKDFRLLRDSRLLSWSFDGTVKVWNVITGRIERD). Residues 1083 to 1122 (CHQGTVLSCAISSDATKFSSTSADKTAKIWSFELPSPLHE) form a WD 2-5 repeat. A WD 2-6 repeat occupies 1125 to 1164 (GHNSCVRCSAFSLDGILLATGDDNGEIRIWNVSDGQLLHL). Residues 1176 to 1213 (THGGWVTDVCFSPDRKMLVSAGGYLKWWNVVTGESSQT) form a WD 2-7 repeat. The WD 2-8 repeat unit spans residues 1214 to 1249 (FYTNGTNLKKIHVSPDFRTYVTVDNLGILYILQVLE).

As to quaternary structure, monomer. Oligomerizes to a heptameric ring, known as the apoptosome, upon binding of cytochrome c and dATP. Oligomeric Apaf-1 and pro-caspase-9 bind to each other via their respective NH2-terminal CARD domains. Interacts with UACA. Interacts with APIP. Interacts (via CARD and NACHT domains) with NAIP/BIRC1 (via NACHT domain). Interacts with CIAO2A.

The protein resides in the cytoplasm. Its function is as follows. Regulates programmed cell death; necessary for normal brain development. Participates with pro-caspase-9 (Apaf-3) in the cytochrome c-dependent activation of caspase-3, leading to apoptosis. This activation requires ATP. The chain is Apoptotic protease-activating factor 1 (Apaf1) from Rattus norvegicus (Rat).